The primary structure comprises 872 residues: Protein translocase subunit SecA (872 aa).

ATP contacts are provided by residues glutamine 87, 105 to 109, and aspartate 510; that span reads GEGKT. The Zn(2+) site is built by cysteine 847, cysteine 849, cysteine 858, and cysteine 859.

This sequence belongs to the SecA family. In terms of assembly, monomer and homodimer. Part of the essential Sec protein translocation apparatus which comprises SecA, SecYEG and auxiliary proteins SecDF-YajC and YidC. It depends on Zn(2+) as a cofactor.

It is found in the cell inner membrane. It localises to the cytoplasm. It catalyses the reaction ATP + H2O + cellular proteinSide 1 = ADP + phosphate + cellular proteinSide 2.. Its function is as follows. Part of the Sec protein translocase complex. Interacts with the SecYEG preprotein conducting channel. Has a central role in coupling the hydrolysis of ATP to the transfer of proteins into and across the cell membrane, serving as an ATP-driven molecular motor driving the stepwise translocation of polypeptide chains across the membrane. This Aliarcobacter butzleri (strain RM4018) (Arcobacter butzleri) protein is Protein translocase subunit SecA.